The following is an 868-amino-acid chain: Ionotropic receptor 93a (868 aa).

Positions 1–28 (MNPGEMRPSACLLLLAGLQLSILVPTEA) are cleaved as a signal peptide. Over 29–565 (NDFSSFLSAN…ITRKPDEVSR (537 aa)) the chain is Extracellular. N-linked (GlcNAc...) asparagine glycans are attached at residues Asn-38, Asn-205, Asn-294, Asn-305, Asn-432, Asn-475, Asn-499, and Asn-543. The chain crosses the membrane as a helical span at residues 566 to 586 (IYLFTAPFTVETWFCLMGIIL). Over 587–642 (LTAPTLYAINRLAPLKEMRIVGLSTVKSCFWYIFGALLQQGGMYLPTADSGRLVVG) the chain is Cytoplasmic. A helical transmembrane segment spans residues 643-663 (FWWIVVIVLVTTYCGNLVAFL). At 664–832 (TFPKFQPGVD…HKVNMDDMQG (169 aa)) the chain is on the extracellular side. The N-linked (GlcNAc...) asparagine glycan is linked to Asn-691. A helical membrane pass occupies residues 833 to 853 (CFLVLLLGFTLALLIVCGEFW). Residues 854-868 (YRRFRASRKRRQFTN) lie on the Cytoplasmic side of the membrane.

It belongs to the glutamate-gated ion channel (TC 1.A.10.1) family. In the antenna, detected in sacculus neurons which innervate the first and second chambers (at protein level). Expressed in multiple cells of the larval dorsal organ ganglion, including the dorsal organ cool cells where it is predominately localized to the dendritic bulbs (at protein level).

The protein localises to the cell membrane. Functionally, integral part of various neural sensory systems in the antenna that provide the neural basis for the response to environmental changes in temperature (thermosensation) and humidity (hygrosensation). Together with Ir21a and Ir25a, mediates the response of the larval dorsal organ cool cells, a trio of cool-responsive neurons, to cooling and is required for cool avoidance behavior. Together with Ir25a and Ir40a, mediates the response of the hydrosensory sacculus neurons to changes in relative humidity, and is required for dry detection and humidiy preference behavior. The sequence is that of Ionotropic receptor 93a from Drosophila melanogaster (Fruit fly).